A 431-amino-acid polypeptide reads, in one-letter code: Histidinol dehydrogenase (431 aa).

NAD(+)-binding residues include tyrosine 124, glutamine 187, and asparagine 210. Residues serine 236, glutamine 258, and histidine 261 each contribute to the substrate site. Positions 258 and 261 each coordinate Zn(2+). Catalysis depends on proton acceptor residues glutamate 325 and histidine 326. Substrate-binding residues include histidine 326, aspartate 359, glutamate 413, and histidine 418. Aspartate 359 lines the Zn(2+) pocket. Zn(2+) is bound at residue histidine 418.

Belongs to the histidinol dehydrogenase family. The cofactor is Zn(2+).

It carries out the reaction L-histidinol + 2 NAD(+) + H2O = L-histidine + 2 NADH + 3 H(+). Its pathway is amino-acid biosynthesis; L-histidine biosynthesis; L-histidine from 5-phospho-alpha-D-ribose 1-diphosphate: step 9/9. Catalyzes the sequential NAD-dependent oxidations of L-histidinol to L-histidinaldehyde and then to L-histidine. This Legionella pneumophila subsp. pneumophila (strain Philadelphia 1 / ATCC 33152 / DSM 7513) protein is Histidinol dehydrogenase.